The following is a 292-amino-acid chain: Phosphotriesterase homology protein (292 aa).

Residues His12, His14, and Glu125 each contribute to the Zn(2+) site. A beta-D-glucose-binding site is contributed by 148–149; sequence HN. His158 is a binding site for Zn(2+). Gly176, Asp178, and Arg181 together coordinate beta-D-glucose. The Zn(2+) site is built by His186 and Asp243. The beta-D-glucose site is built by Asp280 and Arg284.

The protein belongs to the metallo-dependent hydrolases superfamily. Phosphotriesterase family. In terms of assembly, monomer. Zn(2+) is required as a cofactor.

Activity is higher in the enzyme containing Mn(2+) than that containing Zn(2+). Functionally, catalyzes the hydrolysis of phosphorylated glyceryl acetates in which the presence of a phosphate group is required for the enzymatic hydrolysis. Hydrolyzes a dibutyl glycerol derivative suggesting it acts on phosphoglycerol substrates with a butyrate leaving group. Also active with aromatic acetates and propionates. No activity with various sugar phosphates, with various nitrophenylphosphate or nitrophenylphosphonate derivatives, or with phosphorylated or non-phosphorylated sugar lactones tested. Does not hydrolyze non-phosphorylated carboxyesters with long chain leaving groups. No general esterase, aminopeptidase, sulfatase, phosphatase, carbonic anhydrase, phosphodiesterase, and phosphotriesterase activities detected when tested with the following non-specific substrates: p-nitrophenyl acetate, L-alanine nitroanilide, p-nitrophenyl sulfate, bis(p-nitrophenyl) phosphate, paraoxon, and p-nitrophenyl phosphate. The chain is Phosphotriesterase homology protein from Escherichia coli (strain K12).